A 235-amino-acid polypeptide reads, in one-letter code: Maximins-S type A (235 aa).

A signal peptide spans methionine 1–alanine 18. 2 propeptides span residues lysine 19 to arginine 35 and serine 52 to arginine 65. Asparagine 83 is subject to Asparagine amide. A propeptide spanning residues serine 87 to arginine 100 is cleaved from the precursor. Asparagine 118 carries the post-translational modification Asparagine amide. The propeptide occupies serine 122–arginine 135. Asparagine 153 is subject to Asparagine amide. A propeptide spanning residues serine 157–arginine 170 is cleaved from the precursor. Lysine 188 carries the post-translational modification Lysine amide. Positions serine 192–arginine 205 are excised as a propeptide. Lysine amide is present on lysine 223. A propeptide spanning residues serine 227–lysine 235 is cleaved from the precursor.

It belongs to the maximin-S family. As to expression, expressed by the skin dorsal glands.

It is found in the secreted. In terms of biological role, maximin-S1 has no antimicrobial activity. Has no hemolytic activity. Functionally, maximin-S2 has an activity against mycoplasma but has no activity against common Gram-positive and Gram-negative bacteria nor fungi. Has no hemolytic activity. Maximin-S3 has an activity against mycoplasma but has no activity against common Gram-positive and Gram-negative bacteria nor fungi. Has no hemolytic activity. Its function is as follows. Maximin-S4 has an activity against mycoplasma but has no activity against common Gram-positive and Gram-negative bacteria nor fungi. Has no hemolytic activity. In terms of biological role, maximin-S5 has an activity against mycoplasma but has no activity against common Gram-positive and Gram-negative bacteria nor fungi. Has no hemolytic activity. This Bombina maxima (Giant fire-bellied toad) protein is Maximins-S type A.